Reading from the N-terminus, the 275-residue chain is Hydroxyethylthiazole kinase (275 aa).

A substrate-binding site is contributed by methionine 53. Residues arginine 128 and serine 174 each coordinate ATP. Glycine 201 provides a ligand contact to substrate.

It belongs to the Thz kinase family. It depends on Mg(2+) as a cofactor.

It carries out the reaction 5-(2-hydroxyethyl)-4-methylthiazole + ATP = 4-methyl-5-(2-phosphooxyethyl)-thiazole + ADP + H(+). It functions in the pathway cofactor biosynthesis; thiamine diphosphate biosynthesis; 4-methyl-5-(2-phosphoethyl)-thiazole from 5-(2-hydroxyethyl)-4-methylthiazole: step 1/1. In terms of biological role, catalyzes the phosphorylation of the hydroxyl group of 4-methyl-5-beta-hydroxyethylthiazole (THZ). The sequence is that of Hydroxyethylthiazole kinase from Kineococcus radiotolerans (strain ATCC BAA-149 / DSM 14245 / SRS30216).